Consider the following 567-residue polypeptide: Sporulation-specific protein 5 (567 aa).

Residues 1-18 (MNGIITPQKQKQLMSSPS) show a composition bias toward polar residues. Disordered stretches follow at residues 1 to 39 (MNGI…VDVN) and 52 to 76 (ILLT…KKPN). Low complexity predominate over residues 21–35 (PLSTTELSTPTSQTT). Residues 56 to 66 (PGTSPNATPGS) show a composition bias toward polar residues. 2 RRM domains span residues 296-380 (RNVY…SLQD) and 384-462 (TNLY…FADS).

Its subcellular location is the cytoplasm. In terms of biological role, RNA-binding protein which plays a role in sporulation. Regulates the progression of meiosis I and may function in the vicinity of the Mei2 dot. In Schizosaccharomyces pombe (strain 972 / ATCC 24843) (Fission yeast), this protein is Sporulation-specific protein 5 (spo5).